The primary structure comprises 261 residues: Kallikrein-1 (261 aa).

Positions 1-18 (MWFLILFLALSLGRNDAA) are cleaved as a signal peptide. A propeptide spans 19 to 24 (PPVQSR) (activation peptide). In terms of domain architecture, Peptidase S1 spans 25–258 (VVGGYNCEMN…FTPWIKEVMK (234 aa)). Intrachain disulfides connect Cys31–Cys173, Cys50–Cys66, Cys152–Cys219, Cys184–Cys198, and Cys209–Cys234. His65 (charge relay system) is an active-site residue. A glycan (N-linked (GlcNAc...) asparagine) is linked at Asn108. Asp120 acts as the Charge relay system in catalysis. Ser213 acts as the Charge relay system in catalysis.

This sequence belongs to the peptidase S1 family. Kallikrein subfamily. In terms of tissue distribution, high levels in pancreas, submaxillary and parotid glands, spleen, and kidney.

It catalyses the reaction Preferential cleavage of Arg-|-Xaa bonds in small molecule substrates. Highly selective action to release kallidin (lysyl-bradykinin) from kininogen involves hydrolysis of Met-|-Xaa or Leu-|-Xaa.. The sequence is that of Kallikrein-1 (Ngfg) from Rattus norvegicus (Rat).